The primary structure comprises 375 residues: Glutamate 5-kinase (375 aa).

An ATP-binding site is contributed by Lys-3. Substrate contacts are provided by Ser-44, Asp-131, and Asn-143. Residues 163 to 164 (SD) and 205 to 211 (TGGMVTK) contribute to the ATP site. One can recognise a PUA domain in the interval 269-346 (EGTLWVDDGA…GDIEALLGYR (78 aa)).

It belongs to the glutamate 5-kinase family.

It localises to the cytoplasm. The catalysed reaction is L-glutamate + ATP = L-glutamyl 5-phosphate + ADP. It functions in the pathway amino-acid biosynthesis; L-proline biosynthesis; L-glutamate 5-semialdehyde from L-glutamate: step 1/2. Functionally, catalyzes the transfer of a phosphate group to glutamate to form L-glutamate 5-phosphate. In Rhodospirillum rubrum (strain ATCC 11170 / ATH 1.1.1 / DSM 467 / LMG 4362 / NCIMB 8255 / S1), this protein is Glutamate 5-kinase.